Here is a 428-residue protein sequence, read N- to C-terminus: Light-independent protochlorophyllide reductase subunit N (428 aa).

[4Fe-4S] cluster is bound by residues Cys29, Cys54, and Cys115.

Belongs to the BchN/ChlN family. In terms of assembly, protochlorophyllide reductase is composed of three subunits; BchL, BchN and BchB. Forms a heterotetramer of two BchB and two BchN subunits. [4Fe-4S] cluster serves as cofactor.

The enzyme catalyses chlorophyllide a + oxidized 2[4Fe-4S]-[ferredoxin] + 2 ADP + 2 phosphate = protochlorophyllide a + reduced 2[4Fe-4S]-[ferredoxin] + 2 ATP + 2 H2O. It functions in the pathway porphyrin-containing compound metabolism; bacteriochlorophyll biosynthesis (light-independent). Its function is as follows. Component of the dark-operative protochlorophyllide reductase (DPOR) that uses Mg-ATP and reduced ferredoxin to reduce ring D of protochlorophyllide (Pchlide) to form chlorophyllide a (Chlide). This reaction is light-independent. The NB-protein (BchN-BchB) is the catalytic component of the complex. The polypeptide is Light-independent protochlorophyllide reductase subunit N (Cereibacter sphaeroides (strain KD131 / KCTC 12085) (Rhodobacter sphaeroides)).